A 109-amino-acid chain; its full sequence is MRLVARVTVFLTFGTIIDAKTTQPTSMDCAEGRAANLPCNHSTISGNEYVYWYRQIHSQGPQYIIHGLKNNETNEMASLIITEDRKSSTLILPHATLRDTAVYYCIVRV.

Positions 1-19 (MRLVARVTVFLTFGTIIDA) are cleaved as a signal peptide. The 90-residue stretch at 20–109 (KTTQPTSMDC…TAVYYCIVRV (90 aa)) folds into the Ig-like domain. The cysteines at positions 39 and 105 are disulfide-linked. Residues N40 and N71 are each glycosylated (N-linked (GlcNAc...) asparagine).

Alpha-beta TR is a heterodimer composed of an alpha and beta chain; disulfide-linked. The alpha-beta TR is associated with the transmembrane signaling CD3 coreceptor proteins to form the TR-CD3 (TcR or TCR). The assembly of alpha-beta TR heterodimers with CD3 occurs in the endoplasmic reticulum where a single alpha-beta TR heterodimer associates with one CD3D-CD3E heterodimer, one CD3G-CD3E heterodimer and one CD247 homodimer forming a stable octameric structure. CD3D-CD3E and CD3G-CD3E heterodimers preferentially associate with TR alpha and TR beta chains, respectively. The association of the CD247 homodimer is the last step of TcR assembly in the endoplasmic reticulum and is required for transport to the cell surface.

The protein resides in the cell membrane. Functionally, v region of the variable domain of T cell receptor (TR) alpha chain that participates in the antigen recognition. Alpha-beta T cell receptors are antigen specific receptors which are essential to the immune response and are present on the cell surface of T lymphocytes. Recognize peptide-major histocompatibility (MH) (pMH) complexes that are displayed by antigen presenting cells (APC), a prerequisite for efficient T cell adaptive immunity against pathogens. Binding of alpha-beta TR to pMH complex initiates TR-CD3 clustering on the cell surface and intracellular activation of LCK that phosphorylates the ITAM motifs of CD3G, CD3D, CD3E and CD247 enabling the recruitment of ZAP70. In turn ZAP70 phosphorylates LAT, which recruits numerous signaling molecules to form the LAT signalosome. The LAT signalosome propagates signal branching to three major signaling pathways, the calcium, the mitogen-activated protein kinase (MAPK) kinase and the nuclear factor NF-kappa-B (NF-kB) pathways, leading to the mobilization of transcription factors that are critical for gene expression and essential for T cell growth and differentiation. The T cell repertoire is generated in the thymus, by V-(D)-J rearrangement. This repertoire is then shaped by intrathymic selection events to generate a peripheral T cell pool of self-MH restricted, non-autoaggressive T cells. Post-thymic interaction of alpha-beta TR with the pMH complexes shapes TR structural and functional avidity. This chain is T cell receptor alpha variable 26-1, found in Homo sapiens (Human).